An 858-amino-acid chain; its full sequence is Heat shock protein 105 kDa (858 aa).

S2 carries the N-acetylserine modification. The residue at position 471 (K471) is an N6-acetyllysine. Disordered stretches follow at residues 500-585 and 801-858; these read KVPT…PPEA and VTQP…MDLD. The segment covering 504-515 has biased composition (acidic residues); sequence EEEDGSSVEADM. Phosphoserine is present on residues S509 and S510. The span at 533–555 shows a compositional bias: polar residues; it reads QQDNSEAGTQPQVQTDGQQTSQS. A Phosphoserine modification is found at S558. At T562 the chain carries Phosphothreonine. Composition is skewed to basic and acidic residues over residues 564–585 and 806–815; these read EENK…PPEA and PKIESPKLER. S810 carries the phosphoserine modification. T816 bears the Phosphothreonine mark.

Belongs to the heat shock protein 70 family. As to quaternary structure, interacts with HSPA8/HSC70. Interacts with HSPA1A (via NBD) and HSPA1B (via NBD). Phosphorylation on Ser-509 may be important for regulation of the HSPA8/HSC70 chaperone activity.

It is found in the cytoplasm. Functionally, acts as a nucleotide-exchange factor (NEF) for chaperone proteins HSPA1A and HSPA1B, promoting the release of ADP from HSPA1A/B thereby triggering substrate release. Prevents the aggregation of denatured proteins in cells under severe stress, on which the ATP levels decrease markedly. Inhibits HSPA8/HSC70 ATPase and chaperone activities. The sequence is that of Heat shock protein 105 kDa (Hsph1) from Rattus norvegicus (Rat).